Here is a 328-residue protein sequence, read N- to C-terminus: Cell division protein ZipA (328 aa).

Residues Met1 to Asn4 lie on the Periplasmic side of the membrane. A helical membrane pass occupies residues Thr5–Ser25. Over Asn26 to Val328 the chain is Cytoplasmic. The segment at Ser44 to Leu82 is disordered. Polar residues predominate over residues Gln57–Lys81.

This sequence belongs to the ZipA family. In terms of assembly, interacts with FtsZ via their C-terminal domains.

It localises to the cell inner membrane. Functionally, essential cell division protein that stabilizes the FtsZ protofilaments by cross-linking them and that serves as a cytoplasmic membrane anchor for the Z ring. Also required for the recruitment to the septal ring of downstream cell division proteins. The sequence is that of Cell division protein ZipA from Haemophilus influenzae (strain PittGG).